The chain runs to 64 residues: Large ribosomal subunit protein bL35 (64 aa).

This sequence belongs to the bacterial ribosomal protein bL35 family.

In Desulforamulus reducens (strain ATCC BAA-1160 / DSM 100696 / MI-1) (Desulfotomaculum reducens), this protein is Large ribosomal subunit protein bL35.